The following is a 612-amino-acid chain: 1,8-cineole synthase, chloroplastic (612 aa).

A chloroplast-targeting transit peptide spans 1–52 (MALVSVAPLASRSCLSKSLISSTHELKPLRRTILPTLRWKSATPSINMCLTT). Mg(2+) is bound by residues D363, D367, and D515. Positions 363 to 367 (DDIYD) match the DDXXD motif motif.

This sequence belongs to the terpene synthase family. Tpsd subfamily. It depends on Mg(2+) as a cofactor. The cofactor is Mn(2+).

It is found in the plastid. Its subcellular location is the chloroplast. The enzyme catalyses (2E)-geranyl diphosphate + H2O = 1,8-cineole + diphosphate. The protein operates within terpene metabolism; oleoresin biosynthesis. Terpene synthase (TPS) involved in the biosynthesis of monoterpene natural products included in conifer oleoresin secretions and volatile emissions; these compounds contribute to biotic and abiotic stress defense against herbivores and pathogens. Catalyzes the conversion of (2E)-geranyl diphosphate (GPP) to 1,8-cineole. The sequence is that of 1,8-cineole synthase, chloroplastic from Picea sitchensis (Sitka spruce).